Here is a 385-residue protein sequence, read N- to C-terminus: Spermidine/putrescine import ATP-binding protein PotA (385 aa).

The 233-residue stretch at 6–238 (IEFKNVSKVF…PINHFVATFI (233 aa)) folds into the ABC transporter domain. Position 40–47 (40–47 (GASGSGKS)) interacts with ATP.

It belongs to the ABC transporter superfamily. Spermidine/putrescine importer (TC 3.A.1.11.1) family. As to quaternary structure, the complex is composed of two ATP-binding proteins (PotA), two transmembrane proteins (PotB and PotC) and a solute-binding protein (PotD).

The protein resides in the cell membrane. It carries out the reaction ATP + H2O + polyamine-[polyamine-binding protein]Side 1 = ADP + phosphate + polyamineSide 2 + [polyamine-binding protein]Side 1.. Part of the ABC transporter complex PotABCD involved in spermidine/putrescine import. Responsible for energy coupling to the transport system. The sequence is that of Spermidine/putrescine import ATP-binding protein PotA from Streptococcus pneumoniae serotype 4 (strain ATCC BAA-334 / TIGR4).